Here is an 84-residue protein sequence, read N- to C-terminus: Large ribosomal subunit protein bL31B (84 aa).

Belongs to the bacterial ribosomal protein bL31 family. Type B subfamily. In terms of assembly, part of the 50S ribosomal subunit.

The chain is Large ribosomal subunit protein bL31B from Photorhabdus laumondii subsp. laumondii (strain DSM 15139 / CIP 105565 / TT01) (Photorhabdus luminescens subsp. laumondii).